The sequence spans 236 residues: uncharacterized protein (236 aa).

Positions 5-73 (QSTVENAKEK…DRKGWFVTQP (69 aa)) constitute an HTH gntR-type domain. A DNA-binding region (H-T-H motif) is located at residues 33 to 52 (ERELGELLGIKRMTLRQALL).

This is an uncharacterized protein from Escherichia coli O157:H7.